We begin with the raw amino-acid sequence, 426 residues long: Branched-chain amino acid permease BrnQ (426 aa).

Helical transmembrane passes span 11–31 (LMLF…MLGL), 41–61 (ILGF…AVVL), 76–96 (IFGL…YALP), 111–131 (NALY…ALSW), 140–160 (LGKW…VLSV), 186–206 (GYMT…ISAF), 219–239 (VVSA…LGSI), 268–288 (IMFV…LISA), 296–316 (LLPG…SFGV), 324–344 (VLAV…TLVF), 358–378 (TYLF…IPAL), and 390–410 (MSLG…AIDW).

This sequence belongs to the branched chain amino acid transporter family.

The protein localises to the cell membrane. Its function is as follows. Branched chain amino acid transport system, which transports isoleucine. The protein is Branched-chain amino acid permease BrnQ of Corynebacterium glutamicum (strain ATCC 13032 / DSM 20300 / JCM 1318 / BCRC 11384 / CCUG 27702 / LMG 3730 / NBRC 12168 / NCIMB 10025 / NRRL B-2784 / 534).